An 80-amino-acid chain; its full sequence is MARTLEPLAKKIFKGVLVAELVGVFGAYFLFSKMHTSQDFRQTMSKKYPFILEVYYKSTEKSGMYGIRELDQKTWLNSKN.

The helical transmembrane segment at 15–32 threads the bilayer; that stretch reads GVLVAELVGVFGAYFLFS.

It localises to the mitochondrion membrane. The polypeptide is Protein CEBPZOS (Homo sapiens (Human)).